We begin with the raw amino-acid sequence, 321 residues long: Acetyl-coenzyme A carboxylase carboxyl transferase subunit beta, chloroplastic (321 aa).

The CoA carboxyltransferase N-terminal domain maps to 47–321 (LWAQCDNCEN…FWFYVLRSSL (275 aa)). Cys51, Cys54, Cys70, and Cys73 together coordinate Zn(2+). Residues 51–73 (CDNCENLLYLRFLRENQSVCKEC) form a C4-type zinc finger.

Belongs to the AccD/PCCB family. Acetyl-CoA carboxylase is a heterohexamer composed of biotin carboxyl carrier protein, biotin carboxylase and 2 subunits each of ACCase subunit alpha and ACCase plastid-coded subunit beta (accD). The cofactor is Zn(2+).

It localises to the plastid. The protein localises to the chloroplast stroma. The enzyme catalyses N(6)-carboxybiotinyl-L-lysyl-[protein] + acetyl-CoA = N(6)-biotinyl-L-lysyl-[protein] + malonyl-CoA. It functions in the pathway lipid metabolism; malonyl-CoA biosynthesis; malonyl-CoA from acetyl-CoA: step 1/1. Functionally, component of the acetyl coenzyme A carboxylase (ACC) complex. Biotin carboxylase (BC) catalyzes the carboxylation of biotin on its carrier protein (BCCP) and then the CO(2) group is transferred by the transcarboxylase to acetyl-CoA to form malonyl-CoA. The chain is Acetyl-coenzyme A carboxylase carboxyl transferase subunit beta, chloroplastic from Pinus thunbergii (Japanese black pine).